A 172-amino-acid chain; its full sequence is Large ribosomal subunit protein uL10 (172 aa).

Belongs to the universal ribosomal protein uL10 family. Part of the ribosomal stalk of the 50S ribosomal subunit. The N-terminus interacts with L11 and the large rRNA to form the base of the stalk. The C-terminus forms an elongated spine to which L12 dimers bind in a sequential fashion forming a multimeric L10(L12)X complex.

Its function is as follows. Forms part of the ribosomal stalk, playing a central role in the interaction of the ribosome with GTP-bound translation factors. The protein is Large ribosomal subunit protein uL10 (rplJ) of Caulobacter vibrioides (strain ATCC 19089 / CIP 103742 / CB 15) (Caulobacter crescentus).